A 431-amino-acid chain; its full sequence is U-box domain-containing protein 20 (431 aa).

The region spanning 32–106 (TIPSQFQCPI…QGWCGSSLGG (75 aa)) is the U-box domain.

It carries out the reaction S-ubiquitinyl-[E2 ubiquitin-conjugating enzyme]-L-cysteine + [acceptor protein]-L-lysine = [E2 ubiquitin-conjugating enzyme]-L-cysteine + N(6)-ubiquitinyl-[acceptor protein]-L-lysine.. It participates in protein modification; protein ubiquitination. Functions as an E3 ubiquitin ligase. The protein is U-box domain-containing protein 20 (PUB20) of Arabidopsis thaliana (Mouse-ear cress).